A 272-amino-acid chain; its full sequence is GEM-like protein 5 (272 aa).

The disordered stretch occupies residues 1–42 (MTGSQEDQPKIIIDQEQPKTLETEHQPEPSSSSPDQKKWGTH). Basic and acidic residues predominate over residues 16–27 (EQPKTLETEHQP). The GRAM domain maps to 143–221 (SLFRQIFGTE…ANVATVNPVV (79 aa)).

The protein belongs to the GEM family.

This is GEM-like protein 5 from Arabidopsis thaliana (Mouse-ear cress).